The following is a 267-amino-acid chain: Undecaprenyl-diphosphatase (267 aa).

Transmembrane regions (helical) follow at residues 1–21 (MTYF…FLPI), 39–59 (QGLA…VIYF), 83–103 (SNLA…GLLF), 111–131 (LRSA…LWWV), 149–169 (ALFL…RSGI), 189–209 (FLMS…KLAM), 218–238 (LLST…HFFL), and 246–266 (MMPF…WLAL).

Belongs to the UppP family.

It localises to the cell inner membrane. It catalyses the reaction di-trans,octa-cis-undecaprenyl diphosphate + H2O = di-trans,octa-cis-undecaprenyl phosphate + phosphate + H(+). Its function is as follows. Catalyzes the dephosphorylation of undecaprenyl diphosphate (UPP). Confers resistance to bacitracin. The chain is Undecaprenyl-diphosphatase from Aliivibrio fischeri (strain MJ11) (Vibrio fischeri).